Consider the following 269-residue polypeptide: Phosphatidylglycerol--prolipoprotein diacylglyceryl transferase (269 aa).

Transmembrane regions (helical) follow at residues 17–37 (LKIH…WLLA), 56–76 (LVFW…VLFY), 92–112 (WKGG…ALWF), 120–140 (FFEL…AGRI), 174–194 (PSQL…LWLY), 202–222 (MAVS…VEFV), and 237–257 (LTMG…LIWL). R139 provides a ligand contact to a 1,2-diacyl-sn-glycero-3-phospho-(1'-sn-glycerol).

This sequence belongs to the Lgt family.

Its subcellular location is the cell inner membrane. The enzyme catalyses L-cysteinyl-[prolipoprotein] + a 1,2-diacyl-sn-glycero-3-phospho-(1'-sn-glycerol) = an S-1,2-diacyl-sn-glyceryl-L-cysteinyl-[prolipoprotein] + sn-glycerol 1-phosphate + H(+). It participates in protein modification; lipoprotein biosynthesis (diacylglyceryl transfer). Catalyzes the transfer of the diacylglyceryl group from phosphatidylglycerol to the sulfhydryl group of the N-terminal cysteine of a prolipoprotein, the first step in the formation of mature lipoproteins. This Pseudomonas putida (strain W619) protein is Phosphatidylglycerol--prolipoprotein diacylglyceryl transferase.